An 814-amino-acid chain; its full sequence is Rho GTPase-activating protein 44 (814 aa).

A BAR domain is found at 14–249 (QTVGRAEKTE…IKAQQEAWVE (236 aa)). Residues 255-445 (KPLEEHLMIS…PIIQHADWFF (191 aa)) enclose the Rho-GAP domain. Disordered regions lie at residues 467–493 (ANYS…RPLS), 531–768 (SAGR…SMST), and 784–814 (STLR…STAL). A compositionally biased stretch (basic and acidic residues) spans 479-489 (PADRRQPEQAR). S493 bears the Phosphoserine mark. 6 stretches are compositionally biased toward low complexity: residues 531 to 541 (SAGRKAACAPP), 567 to 581 (SPAT…SGAS), 598 to 612 (SPGS…SIQG), 622 to 637 (PQPA…DQSP), 684 to 704 (SPYG…LSPA), and 741 to 752 (SVSLSASSPQST). The segment at 727–814 (KPRQRPTLPP…SEEESESTAL (88 aa)) is interaction with BST2. The span at 790 to 805 (PLEHARRHSVTDKRDS) shows a compositional bias: basic and acidic residues. At S805 the chain carries Phosphoserine. The PDZ-binding signature appears at 811-814 (STAL).

As to quaternary structure, interacts with BST2 (via cytoplasmic domain). Interacts (probably via PDZ-binding motif) with SHANK3 (via PDZ domain); the interaction takes place in dendritic spines and promotes GRIA1 exocytosis. Expressed in brain, detected at high levels in hippocampal CA1 (at protein level).

Its subcellular location is the cell projection. The protein localises to the dendritic spine. The protein resides in the recycling endosome. It is found in the presynapse. It localises to the dendrite. In terms of biological role, GTPase-activating protein (GAP) that stimulates the GTPase activity of Rho-type GTPases. Thereby, controls Rho-type GTPases cycling between their active GTP-bound and inactive GDP-bound states. Acts as a GAP at least for CDC42 and RAC1. In neurons, is involved in dendritic spine formation and synaptic plasticity in a specific RAC1-GAP activity. Limits the initiation of exploratory dendritic filopodia. Recruited to actin-patches that seed filopodia, binds specifically to plasma membrane sections that are deformed inward by acto-myosin mediated contractile forces. Acts through GAP activity on RAC1 to reduce actin polymerization necessary for filopodia formation. In association with SHANK3, promotes GRIA1 exocytosis from recycling endosomes and spine morphological changes associated to long-term potentiation. This Rattus norvegicus (Rat) protein is Rho GTPase-activating protein 44.